The chain runs to 211 residues: Thiamine-phosphate synthase (211 aa).

Residues 37 to 41 (QLRIK) and N69 each bind 4-amino-2-methyl-5-(diphosphooxymethyl)pyrimidine. The Mg(2+) site is built by D70 and D89. S108 is a binding site for 4-amino-2-methyl-5-(diphosphooxymethyl)pyrimidine. 134–136 (TQT) provides a ligand contact to 2-[(2R,5Z)-2-carboxy-4-methylthiazol-5(2H)-ylidene]ethyl phosphate. K137 serves as a coordination point for 4-amino-2-methyl-5-(diphosphooxymethyl)pyrimidine. 2-[(2R,5Z)-2-carboxy-4-methylthiazol-5(2H)-ylidene]ethyl phosphate contacts are provided by residues G166 and 186–187 (VS).

This sequence belongs to the thiamine-phosphate synthase family. The cofactor is Mg(2+).

It carries out the reaction 2-[(2R,5Z)-2-carboxy-4-methylthiazol-5(2H)-ylidene]ethyl phosphate + 4-amino-2-methyl-5-(diphosphooxymethyl)pyrimidine + 2 H(+) = thiamine phosphate + CO2 + diphosphate. The enzyme catalyses 2-(2-carboxy-4-methylthiazol-5-yl)ethyl phosphate + 4-amino-2-methyl-5-(diphosphooxymethyl)pyrimidine + 2 H(+) = thiamine phosphate + CO2 + diphosphate. It catalyses the reaction 4-methyl-5-(2-phosphooxyethyl)-thiazole + 4-amino-2-methyl-5-(diphosphooxymethyl)pyrimidine + H(+) = thiamine phosphate + diphosphate. It participates in cofactor biosynthesis; thiamine diphosphate biosynthesis; thiamine phosphate from 4-amino-2-methyl-5-diphosphomethylpyrimidine and 4-methyl-5-(2-phosphoethyl)-thiazole: step 1/1. Condenses 4-methyl-5-(beta-hydroxyethyl)thiazole monophosphate (THZ-P) and 2-methyl-4-amino-5-hydroxymethyl pyrimidine pyrophosphate (HMP-PP) to form thiamine monophosphate (TMP). The protein is Thiamine-phosphate synthase of Enterobacter sp. (strain 638).